The chain runs to 406 residues: Acetylornithine aminotransferase (406 aa).

Pyridoxal 5'-phosphate-binding positions include 108-109 (GA) and Phe-141. Arg-144 serves as a coordination point for N(2)-acetyl-L-ornithine. Residue 226-229 (DEVQ) coordinates pyridoxal 5'-phosphate. Lys-255 is modified (N6-(pyridoxal phosphate)lysine). Thr-283 contacts N(2)-acetyl-L-ornithine. Thr-284 serves as a coordination point for pyridoxal 5'-phosphate.

It belongs to the class-III pyridoxal-phosphate-dependent aminotransferase family. ArgD subfamily. Homodimer. Pyridoxal 5'-phosphate is required as a cofactor.

It localises to the cytoplasm. It catalyses the reaction N(2)-acetyl-L-ornithine + 2-oxoglutarate = N-acetyl-L-glutamate 5-semialdehyde + L-glutamate. It participates in amino-acid biosynthesis; L-arginine biosynthesis; N(2)-acetyl-L-ornithine from L-glutamate: step 4/4. This chain is Acetylornithine aminotransferase, found in Pseudomonas putida (strain ATCC 47054 / DSM 6125 / CFBP 8728 / NCIMB 11950 / KT2440).